A 406-amino-acid chain; its full sequence is 1H-pyrrole-2-carbonyl-[peptidyl-carrier protein] brominase (406 aa).

Positions 17, 36, 42, 44, 45, 48, 101, 124, 291, and 304 each coordinate FAD.

The protein belongs to the flavin-dependent halogenase family.

It carries out the reaction (1H-pyrrole-2-carbonyl)-[peptidyl-carrier protein] + 3 bromide + 3 FADH2 + 3 O2 = (3,4,5-tribromo-1H-pyrrole-2-carbonyl)-[peptidyl-carrier protein] + 3 FAD + 6 H2O. The catalysed reaction is (1H-pyrrole-2-carbonyl)-[peptidyl-carrier protein] + bromide + FADH2 + O2 = (5-bromo-1H-pyrrole-2-carbonyl)-[peptidyl-carrier protein] + FAD + 2 H2O. The enzyme catalyses (5-bromo-1H-pyrrole-2-carbonyl)-[peptidyl-carrier protein] + bromide + FADH2 + O2 = (4,5-dibromo-1H-pyrrole-2-carbonyl)-[peptidyl-carrier protein] + FAD + 2 H2O. It catalyses the reaction (4,5-dibromo-1H-pyrrole-2-carbonyl)-[peptidyl-carrier protein] + bromide + FADH2 + O2 = (3,4,5-tribromo-1H-pyrrole-2-carbonyl)-[peptidyl-carrier protein] + FAD + 2 H2O. Functionally, brominase involved in the biosynthesis of polybrominated aromatic organic compounds. Catalyzes three successive rounds of bromination of pyrrolyl-S-Bmp1 to produce mono-, di- and tribromopyrrolyl-S-Bmp1. This chain is 1H-pyrrole-2-carbonyl-[peptidyl-carrier protein] brominase, found in Pseudoalteromonas luteoviolacea (strain 2ta16).